Here is a 322-residue protein sequence, read N- to C-terminus: Putative HTH-type transcriptional regulatory protein rrnAC2519 (322 aa).

The HTH cro/C1-type domain maps to 132–189 (LADVREDRDWSLGRLAKELGVSRRTVSKYEDGMDASVEVAAELEDLFDAPLTSPVSVL). Positions 143–162 (LGRLAKELGVSRRTVSKYED) form a DNA-binding region, H-T-H motif.

This is Putative HTH-type transcriptional regulatory protein rrnAC2519 from Haloarcula marismortui (strain ATCC 43049 / DSM 3752 / JCM 8966 / VKM B-1809) (Halobacterium marismortui).